Reading from the N-terminus, the 710-residue chain is Cyclin-dependent kinase G-2 (710 aa).

The segment at 1–350 (MAAGRHGGYR…ETPEPVKPPH (350 aa)) is disordered. Basic and acidic residues predominate over residues 8–30 (GYRDYEARERELDAEASRRSKEQ). Over residues 31-40 (QHHHHPSGRH) the composition is skewed to basic residues. Residues 41 to 64 (QRGDSDPRCEADRRRDGGRSRGGR) show a composition bias toward basic and acidic residues. Over residues 124–133 (SVVAASASSP) the composition is skewed to low complexity. The span at 144-163 (WDRDSPKPMHSDVAKGKKAV) shows a compositional bias: basic and acidic residues. Positions 170-182 (LPLPPPPPLPPQD) are enriched in pro residues. Basic and acidic residues-rich tracts occupy residues 183-195 (HIPE…KSPM) and 209-218 (LQEHAESRVM). Residues 299–308 (DENEDLEVDK) are compositionally biased toward acidic residues. Positions 335-344 (YEVRRSETPE) are enriched in basic and acidic residues. In terms of domain architecture, Protein kinase spans 365–656 (FERLNKINEG…ADAALQHEWF (292 aa)). ATP is bound by residues 371–379 (INEGTYGVV) and lysine 394. Residue threonine 375 is modified to Phosphothreonine. Tyrosine 376 carries the phosphotyrosine modification. Aspartate 489 functions as the Proton acceptor in the catalytic mechanism. Serine 516 is subject to Phosphoserine. The residue at position 522 (threonine 522) is a Phosphothreonine.

The protein belongs to the protein kinase superfamily. CMGC Ser/Thr protein kinase family. CDC2/CDKX subfamily.

It carries out the reaction L-seryl-[protein] + ATP = O-phospho-L-seryl-[protein] + ADP + H(+). It catalyses the reaction L-threonyl-[protein] + ATP = O-phospho-L-threonyl-[protein] + ADP + H(+). The enzyme catalyses [DNA-directed RNA polymerase] + ATP = phospho-[DNA-directed RNA polymerase] + ADP + H(+). The sequence is that of Cyclin-dependent kinase G-2 (CDKG-2) from Oryza sativa subsp. indica (Rice).